Here is a 2230-residue protein sequence, read N- to C-terminus: Golgin subfamily A member 4 (2230 aa).

The disordered stretch occupies residues 1-64 (MFKKLKQKIS…SGDTQSFAQK (64 aa)). At serine 10 the chain carries Phosphoserine. The span at 12–41 (EQQQLQQALAPAQASSNSSTPTRMRSRTSS) shows a compositional bias: low complexity. The residue at position 39 (threonine 39) is a Phosphothreonine. Phosphoserine occurs at positions 41, 71, 78, and 89. The span at 87–107 (SSSKESLVRTSSRESLNRLDL) shows a compositional bias: basic and acidic residues. The tract at residues 87 to 127 (SSSKESLVRTSSRESLNRLDLDSSTASFDPPSDMDSEAEDL) is disordered. The interaction with MACF1 stretch occupies residues 133 to 203 (SLNKEQLIQR…EELQMDQQAK (71 aa)). Positions 133–2185 (SLNKEQLIQR…EYLRKVLFEY (2053 aa)) form a coiled coil. Serine 266 bears the Phosphoserine mark. 2 N-linked (GlcNAc...) asparagine glycosylation sites follow: asparagine 585 and asparagine 1612. A GRIP domain is found at 2168–2215 (LFGEPTEFEYLRKVLFEYMMGRETKTMAKVITTVLKFPDDQTQKILER). The residue at position 2223 (threonine 2223) is a Phosphothreonine.

As to quaternary structure, homodimer. Interacts with RAB6A. Interacts with GTP-bound ARL1 and ARL3. Interacts with MACF1. Directly interacts with TBC1D23. Interacts with FAM91A1; this interaction may be mediated by TBC1D23.

The protein localises to the cytoplasm. The protein resides in the golgi apparatus membrane. Its subcellular location is the golgi apparatus. It is found in the trans-Golgi network membrane. In terms of biological role, involved in vesicular trafficking at the Golgi apparatus level. May play a role in delivery of transport vesicles containing GPI-linked proteins from the trans-Golgi network through its interaction with MACF1. Involved in endosome-to-Golgi trafficking. This is Golgin subfamily A member 4 (GOLGA4) from Homo sapiens (Human).